A 347-amino-acid polypeptide reads, in one-letter code: GMP reductase (347 aa).

Residue 108-131 participates in NADP(+) binding; it reads ADFEKTVQILALDPALNFVCIDVA. Residues glycine 181 and glycine 183 each coordinate K(+). Cysteine 186 functions as the Thioimidate intermediate in the catalytic mechanism. Position 216-239 (216-239) interacts with NADP(+); that stretch reads IVSDGGCTMPGDVAKAFGGGADFV.

The protein belongs to the IMPDH/GMPR family. GuaC type 1 subfamily. In terms of assembly, homotetramer.

The catalysed reaction is IMP + NH4(+) + NADP(+) = GMP + NADPH + 2 H(+). Functionally, catalyzes the irreversible NADPH-dependent deamination of GMP to IMP. It functions in the conversion of nucleobase, nucleoside and nucleotide derivatives of G to A nucleotides, and in maintaining the intracellular balance of A and G nucleotides. This chain is GMP reductase, found in Salmonella paratyphi B (strain ATCC BAA-1250 / SPB7).